A 335-amino-acid chain; its full sequence is Nucleoid-associated protein YejK (335 aa).

It belongs to the YejK family.

It is found in the cytoplasm. It localises to the nucleoid. In Shigella boydii serotype 18 (strain CDC 3083-94 / BS512), this protein is Nucleoid-associated protein YejK.